We begin with the raw amino-acid sequence, 224 residues long: MGQKGCPIGFRTAVTKKWRSLWYGNNQEFGKFLIEDVKIREFLKKKPSCQGAAGFVVKRMSGKIEVTIHTARPGLVIGKKGAEVESLKAELKKLTGKDVWVEIAEVKRPELNAQLVADGIAKQIERRVSFRRAMKKALQSVMDAGALGVKVQVSGRLAGAEIARSEWYKNGRVPLHTLRADIDYATASAETTYGIIGIKVWINLSEKKAVPAANHAGAASTAAA.

Residues 39–107 (IREFLKKKPS…DVWVEIAEVK (69 aa)) form the KH type-2 domain.

Belongs to the universal ribosomal protein uS3 family. As to quaternary structure, part of the 30S ribosomal subunit. Forms a tight complex with proteins S10 and S14.

In terms of biological role, binds the lower part of the 30S subunit head. Binds mRNA in the 70S ribosome, positioning it for translation. This is Small ribosomal subunit protein uS3 from Chlamydia trachomatis serovar A (strain ATCC VR-571B / DSM 19440 / HAR-13).